The sequence spans 382 residues: Methylthioribose-1-phosphate isomerase (382 aa).

The Proton donor role is filled by aspartate 258.

This sequence belongs to the eIF-2B alpha/beta/delta subunits family. MtnA subfamily.

It is found in the cytoplasm. It localises to the nucleus. The enzyme catalyses 5-(methylsulfanyl)-alpha-D-ribose 1-phosphate = 5-(methylsulfanyl)-D-ribulose 1-phosphate. It functions in the pathway amino-acid biosynthesis; L-methionine biosynthesis via salvage pathway; L-methionine from S-methyl-5-thio-alpha-D-ribose 1-phosphate: step 1/6. Its function is as follows. Catalyzes the interconversion of methylthioribose-1-phosphate (MTR-1-P) into methylthioribulose-1-phosphate (MTRu-1-P). The sequence is that of Methylthioribose-1-phosphate isomerase from Laccaria bicolor (strain S238N-H82 / ATCC MYA-4686) (Bicoloured deceiver).